A 1062-amino-acid chain; its full sequence is Carbamoyl phosphate synthase large chain (1062 aa).

The interval methionine 1–glutamate 401 is carboxyphosphate synthetic domain. Residues arginine 129, arginine 169, glycine 175, glycine 176, lysine 208, isoleucine 210, glutamate 215, glycine 241, isoleucine 242, histidine 243, glutamine 284, and glutamate 298 each coordinate ATP. Residues lysine 133–isoleucine 327 form the ATP-grasp 1 domain. Mg(2+) contacts are provided by glutamine 284, glutamate 298, and asparagine 300. Mn(2+) is bound by residues glutamine 284, glutamate 298, and asparagine 300. Positions isoleucine 402–serine 546 are oligomerization domain. A carbamoyl phosphate synthetic domain region spans residues histidine 547–lysine 929. Positions aspartate 671 to methionine 861 constitute an ATP-grasp 2 domain. 10 residues coordinate ATP: arginine 707, aspartate 746, leucine 748, glutamate 752, glycine 777, valine 778, histidine 779, serine 780, glutamine 820, and glutamate 832. Mg(2+)-binding residues include glutamine 820, glutamate 832, and asparagine 834. Residues glutamine 820, glutamate 832, and asparagine 834 each coordinate Mn(2+). The MGS-like domain occupies methionine 930–lysine 1062. An allosteric domain region spans residues methionine 930–lysine 1062.

This sequence belongs to the CarB family. As to quaternary structure, composed of two chains; the small (or glutamine) chain promotes the hydrolysis of glutamine to ammonia, which is used by the large (or ammonia) chain to synthesize carbamoyl phosphate. Tetramer of heterodimers (alpha,beta)4. Mg(2+) is required as a cofactor. The cofactor is Mn(2+).

The enzyme catalyses hydrogencarbonate + L-glutamine + 2 ATP + H2O = carbamoyl phosphate + L-glutamate + 2 ADP + phosphate + 2 H(+). The catalysed reaction is hydrogencarbonate + NH4(+) + 2 ATP = carbamoyl phosphate + 2 ADP + phosphate + 2 H(+). The protein operates within amino-acid biosynthesis; L-arginine biosynthesis; carbamoyl phosphate from bicarbonate: step 1/1. It functions in the pathway pyrimidine metabolism; UMP biosynthesis via de novo pathway; (S)-dihydroorotate from bicarbonate: step 1/3. Large subunit of the glutamine-dependent carbamoyl phosphate synthetase (CPSase). CPSase catalyzes the formation of carbamoyl phosphate from the ammonia moiety of glutamine, carbonate, and phosphate donated by ATP, constituting the first step of 2 biosynthetic pathways, one leading to arginine and/or urea and the other to pyrimidine nucleotides. The large subunit (synthetase) binds the substrates ammonia (free or transferred from glutamine from the small subunit), hydrogencarbonate and ATP and carries out an ATP-coupled ligase reaction, activating hydrogencarbonate by forming carboxy phosphate which reacts with ammonia to form carbamoyl phosphate. This chain is Carbamoyl phosphate synthase large chain, found in Lactobacillus johnsonii (strain CNCM I-12250 / La1 / NCC 533).